A 131-amino-acid chain; its full sequence is Fluoride-specific ion channel FluC (131 aa).

3 helical membrane-spanning segments follow: residues 3–23, 34–54, and 62–82; these read AAAN…GAWL, IFLT…LLMG, and AVPA…LGGL. Na(+) is bound by residues Gly-80 and Thr-83. Residues 101 to 121 traverse the membrane as a helical segment; it reads WGWLALHAAVHVAGSLLMAWI.

The protein belongs to the fluoride channel Fluc/FEX (TC 1.A.43) family.

The protein localises to the cell inner membrane. The enzyme catalyses fluoride(in) = fluoride(out). Its activity is regulated as follows. Na(+) is not transported, but it plays an essential structural role and its presence is essential for fluoride channel function. In terms of biological role, fluoride-specific ion channel. Important for reducing fluoride concentration in the cell, thus reducing its toxicity. The sequence is that of Fluoride-specific ion channel FluC from Aromatoleum aromaticum (strain DSM 19018 / LMG 30748 / EbN1) (Azoarcus sp. (strain EbN1)).